The chain runs to 171 residues: Transcription elongation factor GreB (171 aa).

Positions 53–75 (KKRLREIDRRVRFLAKRLEVLKI) form a coiled coil.

This sequence belongs to the GreA/GreB family. GreB subfamily.

Necessary for efficient RNA polymerase transcription elongation past template-encoded arresting sites. The arresting sites in DNA have the property of trapping a certain fraction of elongating RNA polymerases that pass through, resulting in locked ternary complexes. Cleavage of the nascent transcript by cleavage factors such as GreA or GreB allows the resumption of elongation from the new 3'terminus. GreB releases sequences of up to 9 nucleotides in length. In Yersinia pestis, this protein is Transcription elongation factor GreB.